Reading from the N-terminus, the 23-residue chain is Acidic phospholipase A2 CTs-A1 (23 aa).

It depends on Ca(2+) as a cofactor. Contains 7 disulfide bonds. In terms of tissue distribution, expressed by the venom gland.

The protein localises to the secreted. The enzyme catalyses a 1,2-diacyl-sn-glycero-3-phosphocholine + H2O = a 1-acyl-sn-glycero-3-phosphocholine + a fatty acid + H(+). Snake venom phospholipase A2 (PLA2) that shows a moderate inhibition of ADP-induced human platelet aggregation when tested on platelet rich plasma. Exhibits moderate hydrolytic activities and prefers the anionic micelles (dPPC with deoxycholate) to the zwitterionic micelles (dPPC with Triton X-100). PLA2 catalyzes the calcium-dependent hydrolysis of the 2-acyl groups in 3-sn-phosphoglycerides. The polypeptide is Acidic phospholipase A2 CTs-A1 (Trimeresurus stejnegeri (Chinese green tree viper)).